Here is a 313-residue protein sequence, read N- to C-terminus: Ribosomal protein L11 methyltransferase (313 aa).

Residues threonine 164, glycine 185, aspartate 207, and asparagine 249 each contribute to the S-adenosyl-L-methionine site.

The protein belongs to the methyltransferase superfamily. PrmA family.

The protein resides in the cytoplasm. The catalysed reaction is L-lysyl-[protein] + 3 S-adenosyl-L-methionine = N(6),N(6),N(6)-trimethyl-L-lysyl-[protein] + 3 S-adenosyl-L-homocysteine + 3 H(+). Methylates ribosomal protein L11. The sequence is that of Ribosomal protein L11 methyltransferase from Clostridium perfringens (strain 13 / Type A).